A 96-amino-acid chain; its full sequence is Non-specific lipid-transfer protein 2G (96 aa).

The first 29 residues, 1–29 (MAGMMKKQVVTALMLALVVLAAAPGGARA), serve as a signal peptide directing secretion. Disulfide bonds link cysteine 31–cysteine 63, cysteine 39–cysteine 53, cysteine 54–cysteine 89, and cysteine 65–cysteine 96.

It localises to the secreted. The protein resides in the cell wall. Functionally, transfer lipids across membranes. May play a role in plant defense or in the biosynthesis of cuticle layers. The chain is Non-specific lipid-transfer protein 2G from Triticum aestivum (Wheat).